A 390-amino-acid chain; its full sequence is Carbamoyl phosphate synthase small chain (390 aa).

Positions 1–198 (MTSTPTPTPT…LGEGYAVGPE (198 aa)) are CPSase. Residues serine 53, glycine 250, and glycine 252 each contribute to the L-glutamine site. Residues 202 to 390 (RVVVLDYGVK…VGELKGRVEA (189 aa)) enclose the Glutamine amidotransferase type-1 domain. The active-site Nucleophile is cysteine 279. 5 residues coordinate L-glutamine: leucine 280, glutamine 283, asparagine 321, glycine 323, and phenylalanine 324. Residues histidine 363 and glutamate 365 contribute to the active site.

It belongs to the CarA family. As to quaternary structure, composed of two chains; the small (or glutamine) chain promotes the hydrolysis of glutamine to ammonia, which is used by the large (or ammonia) chain to synthesize carbamoyl phosphate. Tetramer of heterodimers (alpha,beta)4.

It catalyses the reaction hydrogencarbonate + L-glutamine + 2 ATP + H2O = carbamoyl phosphate + L-glutamate + 2 ADP + phosphate + 2 H(+). It carries out the reaction L-glutamine + H2O = L-glutamate + NH4(+). It functions in the pathway amino-acid biosynthesis; L-arginine biosynthesis; carbamoyl phosphate from bicarbonate: step 1/1. The protein operates within pyrimidine metabolism; UMP biosynthesis via de novo pathway; (S)-dihydroorotate from bicarbonate: step 1/3. Its function is as follows. Small subunit of the glutamine-dependent carbamoyl phosphate synthetase (CPSase). CPSase catalyzes the formation of carbamoyl phosphate from the ammonia moiety of glutamine, carbonate, and phosphate donated by ATP, constituting the first step of 2 biosynthetic pathways, one leading to arginine and/or urea and the other to pyrimidine nucleotides. The small subunit (glutamine amidotransferase) binds and cleaves glutamine to supply the large subunit with the substrate ammonia. The protein is Carbamoyl phosphate synthase small chain of Maricaulis maris (strain MCS10) (Caulobacter maris).